Consider the following 96-residue polypeptide: Co-chaperonin GroES (96 aa).

The protein belongs to the GroES chaperonin family. Heptamer of 7 subunits arranged in a ring. Interacts with the chaperonin GroEL.

The protein localises to the cytoplasm. Its function is as follows. Together with the chaperonin GroEL, plays an essential role in assisting protein folding. The GroEL-GroES system forms a nano-cage that allows encapsulation of the non-native substrate proteins and provides a physical environment optimized to promote and accelerate protein folding. GroES binds to the apical surface of the GroEL ring, thereby capping the opening of the GroEL channel. The polypeptide is Co-chaperonin GroES (Allochromatium vinosum (Chromatium vinosum)).